Consider the following 276-residue polypeptide: Shikimate dehydrogenase (NADP(+)) (276 aa).

Shikimate-binding positions include 20–22 and T67; that span reads SRS. Residue K71 is the Proton acceptor of the active site. NADP(+) is bound at residue D83. Residues N92 and D107 each contribute to the shikimate site. NADP(+)-binding positions include 131-135 and I217; that span reads GAGGA. Shikimate is bound at residue Y219. G240 serves as a coordination point for NADP(+).

It belongs to the shikimate dehydrogenase family. Homodimer.

It catalyses the reaction shikimate + NADP(+) = 3-dehydroshikimate + NADPH + H(+). It functions in the pathway metabolic intermediate biosynthesis; chorismate biosynthesis; chorismate from D-erythrose 4-phosphate and phosphoenolpyruvate: step 4/7. In terms of biological role, involved in the biosynthesis of the chorismate, which leads to the biosynthesis of aromatic amino acids. Catalyzes the reversible NADPH linked reduction of 3-dehydroshikimate (DHSA) to yield shikimate (SA). The sequence is that of Shikimate dehydrogenase (NADP(+)) from Acidiphilium cryptum (strain JF-5).